A 146-amino-acid polypeptide reads, in one-letter code: UPF0178 protein BCG9842_B2187 (146 aa).

This sequence belongs to the UPF0178 family.

In Bacillus cereus (strain G9842), this protein is UPF0178 protein BCG9842_B2187.